The chain runs to 79 residues: RNA-binding protein Hfq (79 aa).

The region spanning 10–69 (DPFLNALRKEHVPVSIYLVNGIKLQGNIESFDQYVVLLRNTVTQMVYKHAISTVVPARPV) is the Sm domain.

This sequence belongs to the Hfq family. Homohexamer.

Functionally, RNA chaperone that binds small regulatory RNA (sRNAs) and mRNAs to facilitate mRNA translational regulation in response to envelope stress, environmental stress and changes in metabolite concentrations. Also binds with high specificity to tRNAs. The sequence is that of RNA-binding protein Hfq from Burkholderia mallei (strain ATCC 23344).